The primary structure comprises 484 residues: Arachin Ahy-3 (484 aa).

A signal peptide spans 1–20 (MAKLLALSVCFCFLVLGASS). 2 disulfide bridges follow: C32-C65 and C108-C305. A Cupin type-1 1 domain is found at 35-253 (QRLNAQRPDN…GFQVNEDIVR (219 aa)). The segment at 208–233 (QQRSGRQSPKGEEQEQEQENEGGNVF) is disordered. Residues 295 to 298 (DFNN) constitute a propeptide that is removed on maturation. A Cupin type-1 2 domain is found at 311 to 460 (MNIGKSTSAD…SYGLQYEQAR (150 aa)). The propeptide occupies 479-484 (MIRTVA).

This sequence belongs to the 11S seed storage protein (globulins) family. In terms of assembly, hexamer; each subunit is composed of an acidic and a basic chain derived from a single precursor and linked by a disulfide bond.

This is Arachin Ahy-3 from Arachis hypogaea (Peanut).